Consider the following 323-residue polypeptide: o-succinylbenzoate synthase (323 aa).

Residue lysine 134 is the Proton donor of the active site. The Mg(2+) site is built by aspartate 162, glutamate 191, and aspartate 214. Lysine 236 serves as the catalytic Proton acceptor.

The protein belongs to the mandelate racemase/muconate lactonizing enzyme family. MenC type 1 subfamily. It depends on a divalent metal cation as a cofactor.

The enzyme catalyses (1R,6R)-6-hydroxy-2-succinyl-cyclohexa-2,4-diene-1-carboxylate = 2-succinylbenzoate + H2O. It participates in quinol/quinone metabolism; 1,4-dihydroxy-2-naphthoate biosynthesis; 1,4-dihydroxy-2-naphthoate from chorismate: step 4/7. The protein operates within quinol/quinone metabolism; menaquinone biosynthesis. Converts 2-succinyl-6-hydroxy-2,4-cyclohexadiene-1-carboxylate (SHCHC) to 2-succinylbenzoate (OSB). The protein is o-succinylbenzoate synthase of Yersinia enterocolitica serotype O:8 / biotype 1B (strain NCTC 13174 / 8081).